The sequence spans 220 residues: MSSLPALDQFFTLYHQAYSDKLGESPRYFPLGEASPCVLECDQEKVDASPERSVQWQAVKRDSQGPFDNIEHALSITLHPSIQAFYGRYFAAPLMFESEFGEGELLQPWNQQDFEYLQQNLIGHLMMKQKLKQPATWFIGVLGEGDEMLVVENETGSVWIEIPGEQPHRQLAASLEDFIASLRPRVCPPQKPVEAPMPETDHPGIWQRLKTMWRHLIAKR.

It belongs to the Syd family.

It is found in the cell inner membrane. In terms of biological role, interacts with the SecY protein in vivo. May bind preferentially to an uncomplexed state of SecY, thus functioning either as a chelating agent for excess SecY in the cell or as a regulatory factor that negatively controls the translocase function. The chain is Protein Syd from Shewanella loihica (strain ATCC BAA-1088 / PV-4).